Here is a 161-residue protein sequence, read N- to C-terminus: Lipid droplet assembly factor 1 (161 aa).

Residues 1–43 lie on the Cytoplasmic side of the membrane; the sequence is MAKEEPQSISRDLQELQKKLSLLIDSFQNNSKVVAFMKSPVGQ. Residues 44-61 traverse the membrane as a helical segment; sequence YLDSHPFLAFTLLVFIVM. Residues 62-67 lie on the Lumenal side of the membrane; the sequence is SAVPVG. Residues 68–87 form a helical membrane-spanning segment; it reads FFLLIVVLTTLAALLGVIIL. Over 88–93 the chain is Cytoplasmic; sequence EGLVIS. The helical transmembrane segment at 94-110 threads the bilayer; it reads VGGFSLLCILCGLGFVS. Residues 111–116 are Lumenal-facing; the sequence is LAMSGM. A helical transmembrane segment spans residues 117 to 133; sequence MIASYVVVSSLISCWFS. At 134–161 the chain is on the cytoplasmic side; it reads PRPLTQQNTSCDFLPAMKSAEFEGLYQE.

This sequence belongs to the LDAF1 family. As to quaternary structure, interacts with isoform 1 and isoform 3 of BSCL2/seipin to form an oligomeric complex. In terms of tissue distribution, expressed at high levels in the heart and skeletal muscle. Expressed at low levels in kidney, small intestine, lung and liver.

Its subcellular location is the endoplasmic reticulum membrane. It is found in the lipid droplet. In terms of biological role, plays an important role in the formation of lipid droplets (LD) which are storage organelles at the center of lipid and energy homeostasis. In association with BSCL2/seipin, defines the sites of LD formation in the endoplasmic reticulum. This chain is Lipid droplet assembly factor 1, found in Homo sapiens (Human).